A 242-amino-acid polypeptide reads, in one-letter code: Pyridoxine 5'-phosphate synthase (242 aa).

N7 is a 3-amino-2-oxopropyl phosphate binding site. Residue 9-10 (DH) coordinates 1-deoxy-D-xylulose 5-phosphate. R18 serves as a coordination point for 3-amino-2-oxopropyl phosphate. The active-site Proton acceptor is the H43. Positions 45 and 50 each coordinate 1-deoxy-D-xylulose 5-phosphate. E70 acts as the Proton acceptor in catalysis. T100 is a 1-deoxy-D-xylulose 5-phosphate binding site. H190 (proton donor) is an active-site residue. 3-amino-2-oxopropyl phosphate-binding positions include G191 and 212-213 (GH).

The protein belongs to the PNP synthase family. In terms of assembly, homooctamer; tetramer of dimers.

The protein resides in the cytoplasm. The catalysed reaction is 3-amino-2-oxopropyl phosphate + 1-deoxy-D-xylulose 5-phosphate = pyridoxine 5'-phosphate + phosphate + 2 H2O + H(+). It functions in the pathway cofactor biosynthesis; pyridoxine 5'-phosphate biosynthesis; pyridoxine 5'-phosphate from D-erythrose 4-phosphate: step 5/5. Its function is as follows. Catalyzes the complicated ring closure reaction between the two acyclic compounds 1-deoxy-D-xylulose-5-phosphate (DXP) and 3-amino-2-oxopropyl phosphate (1-amino-acetone-3-phosphate or AAP) to form pyridoxine 5'-phosphate (PNP) and inorganic phosphate. The polypeptide is Pyridoxine 5'-phosphate synthase (Thermodesulfovibrio yellowstonii (strain ATCC 51303 / DSM 11347 / YP87)).